The following is a 634-amino-acid chain: (-)-limonene synthase, chloroplastic (634 aa).

The N-terminal 21 residues, 1-21 (MSPVSAIPLAYKLCLPRSLIS), are a transit peptide targeting the chloroplast. R348, D385, D389, R526, and G529 together coordinate (2E)-geranyl diphosphate. 2 residues coordinate Mg(2+): D385 and D389. Residues 385–389 (DDIYD) carry the DDXXD motif motif. Mg(2+) contacts are provided by G529 and D537.

Belongs to the terpene synthase family. Tpsb subfamily. In terms of assembly, monomer. Mg(2+) serves as cofactor. Requires Mn(2+) as cofactor.

The protein resides in the plastid. The protein localises to the chloroplast. It catalyses the reaction (2E)-geranyl diphosphate = (4S)-limonene + diphosphate. Its pathway is secondary metabolite biosynthesis; terpenoid biosynthesis. It functions in the pathway terpene metabolism; oleoresin biosynthesis. In terms of biological role, monoterpene synthase (mono-TPS) involved in the biosynthesis of monoterpene natural products. Catalyzes the conversion of (2E)-geranyl diphosphate (GPP) into (-)-limonene. Not able to use geranylgeranyl pyrophosphate (GGPP) and farnesyl pyrophosphate (FPP) as substrates. The polypeptide is (-)-limonene synthase, chloroplastic (Picea sitchensis (Sitka spruce)).